The primary structure comprises 270 residues: uncharacterized protein (270 aa).

Positions 34–266 (LIARGLTKSY…PDVRRLYLGD (233 aa)) constitute an ABC transporter domain. An ATP-binding site is contributed by 66–73 (GPNGAGKT).

This sequence belongs to the ABC transporter superfamily.

This is an uncharacterized protein from Rhizobium meliloti (strain 1021) (Ensifer meliloti).